A 229-amino-acid chain; its full sequence is MGKKYIESAKLVDKNTLYAPDEAVDLVVKTSKAKFDETVELAVRLGVDPRHADQQVRGVVILPNGTGKKVRVLVFAKGDKAKEAEAAGADYVGAEELATKIQSENWFDFDVVVATPDMMGVVGRLGRVLGPKGLMPNPKSGTVTFDVAKALTEIKAGKVEYRVDKTAIVHVPVGKSSFGAEKLKQNFHALMDAIVKAKPASAKGQYVKSVALSSTMGPGIKINPVKVLD.

This sequence belongs to the universal ribosomal protein uL1 family. As to quaternary structure, part of the 50S ribosomal subunit.

In terms of biological role, binds directly to 23S rRNA. The L1 stalk is quite mobile in the ribosome, and is involved in E site tRNA release. Protein L1 is also a translational repressor protein, it controls the translation of the L11 operon by binding to its mRNA. In Clostridium acetobutylicum (strain ATCC 824 / DSM 792 / JCM 1419 / IAM 19013 / LMG 5710 / NBRC 13948 / NRRL B-527 / VKM B-1787 / 2291 / W), this protein is Large ribosomal subunit protein uL1.